The following is a 176-amino-acid chain: Protein SPMIP1 (176 aa).

A disordered region spans residues 55–80 (TLHPKAPLSPPPAPKSAPSKVPSPVP). The span at 61-80 (PLSPPPAPKSAPSKVPSPVP) shows a compositional bias: pro residues.

The chain is Protein SPMIP1 from Homo sapiens (Human).